A 195-amino-acid polypeptide reads, in one-letter code: Peptidyl-tRNA hydrolase (195 aa).

Tyrosine 18 provides a ligand contact to tRNA. The Proton acceptor role is filled by histidine 23. TRNA-binding residues include phenylalanine 69, asparagine 71, and asparagine 117.

Belongs to the PTH family. As to quaternary structure, monomer.

Its subcellular location is the cytoplasm. The catalysed reaction is an N-acyl-L-alpha-aminoacyl-tRNA + H2O = an N-acyl-L-amino acid + a tRNA + H(+). Its function is as follows. Hydrolyzes ribosome-free peptidyl-tRNAs (with 1 or more amino acids incorporated), which drop off the ribosome during protein synthesis, or as a result of ribosome stalling. In terms of biological role, catalyzes the release of premature peptidyl moieties from peptidyl-tRNA molecules trapped in stalled 50S ribosomal subunits, and thus maintains levels of free tRNAs and 50S ribosomes. The protein is Peptidyl-tRNA hydrolase of Hahella chejuensis (strain KCTC 2396).